The following is an 863-amino-acid chain: Potassium/sodium hyperpolarization-activated cyclic nucleotide-gated channel 2 (863 aa).

The span at 1 to 10 shows a compositional bias: gly residues; sequence MDARGGGGRP. The segment at 1–131 is disordered; sequence MDARGGGGRP…AGPAGEPRGS (131 aa). Over 1–188 the chain is Cytoplasmic; the sequence is MDARGGGGRP…PYSDFRFYWD (188 aa). The segment covering 17-47 has biased composition (pro residues); it reads TPAPGPPPPPPPPAPPQPQPPPAPPPNPTTP. Over residues 106-128 the composition is skewed to low complexity; the sequence is GAASGPSAAEEAGSEEAGPAGEP. 2 positions are modified to phosphoserine: S119 and S134. Positions 131-182 are involved in subunit assembly; that stretch reads SQASFLQRQFGALLQPGVNKFSLRMFGSQKAVEREQERVKSAGAWIIHPYSD. Residues 189-209 traverse the membrane as a helical segment; it reads FTMLLFMVGNLIIIPVGITFF. Topologically, residues 210–213 are extracellular; the sequence is KDET. The chain crosses the membrane as a helical span at residues 214–234; it reads TAPWIVFNVVSDTFFLMDLVL. Over 235-261 the chain is Cytoplasmic; the sequence is NFRTGIVIEDNTEIILDPEKIKKKYLR. Residues 262 to 282 form a helical membrane-spanning segment; sequence TWFVVDFVSSIPVDYIFLIVE. The Extracellular segment spans residues 283–290; sequence KGIDSEVY. Residues 291–311 traverse the membrane as a helical; Voltage-sensor segment; that stretch reads KTARALRIVRFTKILSLLRLL. The Cytoplasmic portion of the chain corresponds to 312-342; that stretch reads RLSRLIRYIHQWEEIFHMTYDLASAVMRICN. Residues 343–363 form a helical membrane-spanning segment; it reads LISMMLLLCHWDGCLQFLVPM. Residues 364–386 lie on the Extracellular side of the membrane; that stretch reads LQDFPSDCWVSINNMVNHSWSEL. N380 carries N-linked (GlcNAc...) asparagine glycosylation. The segment at residues 387–408 is an intramembrane region (pore-forming); it reads YSFALFKAMSHMLCIGYGRQAP. Topologically, residues 409–413 are extracellular; the sequence is ESMTD. Residues 414–434 traverse the membrane as a helical segment; sequence IWLTMLSMIVGATCYAMFIGH. The Cytoplasmic segment spans residues 435–863; that stretch reads ATALIQSLDS…SARSRLSSNL (429 aa). Residues G581, E582, C584, R591, T592, and R632 each coordinate 3',5'-cyclic AMP. Phosphoserine; by PKG/PRKG2 is present on S641. A Phosphoserine modification is found at S726. R728 carries the post-translational modification Omega-N-methylarginine. The disordered stretch occupies residues 730–863; sequence VRRAPPGPLP…SARSRLSSNL (134 aa). Pro residues predominate over residues 734-755; sequence PPGPLPPAASPGPPAASPPAAP. Phosphoserine occurs at positions 743, 750, and 757. 3 stretches are compositionally biased toward low complexity: residues 756-765, 778-800, and 808-834; these read SSPRAPRTSP, PALPARRLSRASRPLSASQPSLP, and PAASARPASSSTPRLGPAPTARTAAPS. Residues S840, S842, and S847 each carry the phosphoserine modification.

This sequence belongs to the potassium channel HCN family. Homotetramer. The channel is composed of a homo- or heterotetrameric complex of pore-forming subunits. Heterotetramer with HCN1. Forms an obligate 4:4 complex with accessory subunit PEX5L; regulates HCN2 cell-surface expression and cyclic nucleotide dependence. Interacts with KCNE2. S-palmitoylated. Post-translationally, N-glycosylated; required for cell surface trafficking of HCN2. In terms of processing, phosphorylation at Ser-641 by PRKG2 shifts the voltage-dependence to more negative voltages, hence counteracting the stimulatory effect of cGMP on gating. As to expression, highly expressed in brain. Detected at low levels in heart, in ventricle, atrium and in sinoatrial node (SAN).

It localises to the cell membrane. It catalyses the reaction Na(+)(in) = Na(+)(out). The catalysed reaction is K(+)(in) = K(+)(out). The enzyme catalyses NH4(+)(in) = NH4(+)(out). Activated by cAMP, and at 10-100 times higher concentrations, also by cGMP. cAMP binding causes a conformation change that leads to the assembly of an active tetramer and channel opening. In the absence of cAMP, the C-terminal region is thought to exert a tonic inhibition on the pore when HCN2 is in a non-tetrameric form. Channel activity is modulated by intracellular chloride ions and pH; acidic pH shifts the activation to more negative voltages. Phosphatidylinositol-4,5- bisphosphate (PIP(2)) acts as a ligand that allosterically opens HCN2 by shifting voltage-dependent channel activation toward depolarized potentials. Inhibited by extracellular cesium ions. Hyperpolarization-activated ion channel exhibiting weak selectivity for potassium over sodium ions. Contributes to the native pacemaker currents in heart (If) and in neurons (Ih). Can also transport ammonium in the distal nephron. Involved in the initiation of neuropathic pain in sensory neurons. This is Potassium/sodium hyperpolarization-activated cyclic nucleotide-gated channel 2 from Mus musculus (Mouse).